The chain runs to 255 residues: Large ribosomal subunit protein uL6m (255 aa).

The interval 39-61 is disordered; sequence AARRNFSATTTRPSKLGRTPLSI.

Belongs to the universal ribosomal protein uL6 family. Component of the mitochondrial large ribosomal subunit (mt-LSU). Mature N.crassa 74S mitochondrial ribosomes consist of a small (37S) and a large (54S) subunit. The 37S small subunit contains a 16S ribosomal RNA (16S mt-rRNA) and 32 different proteins. The 54S large subunit contains a 23S rRNA (23S mt-rRNA) and 42 different proteins.

The protein localises to the mitochondrion. In terms of biological role, component of the mitochondrial ribosome (mitoribosome), a dedicated translation machinery responsible for the synthesis of mitochondrial genome-encoded proteins, including at least some of the essential transmembrane subunits of the mitochondrial respiratory chain. The mitoribosomes are attached to the mitochondrial inner membrane and translation products are cotranslationally integrated into the membrane. In Neurospora crassa (strain ATCC 24698 / 74-OR23-1A / CBS 708.71 / DSM 1257 / FGSC 987), this protein is Large ribosomal subunit protein uL6m (mrpl6).